Reading from the N-terminus, the 112-residue chain is MALQSTLGAVWLGLLLNSLWKVAESKDQVFQPSTVASSEGAVVEIFCNHSVSNAYNFFWYLHFPGCAPRLLVKGSKPSQQGRYNMTYERFSSSLLILQVREADAAVYYCAVE.

The N-terminal stretch at 1-25 is a signal peptide; that stretch reads MALQSTLGAVWLGLLLNSLWKVAES. Residues 26 to 112 enclose the Ig-like domain; the sequence is KDQVFQPSTV…DAAVYYCAVE (87 aa). Cys47 and Cys109 are oxidised to a cystine. 2 N-linked (GlcNAc...) asparagine glycosylation sites follow: Asn48 and Asn84.

In terms of assembly, alpha-beta TR is a heterodimer composed of an alpha and beta chain; disulfide-linked. The alpha-beta TR is associated with the transmembrane signaling CD3 coreceptor proteins to form the TR-CD3 (TcR or TCR). The assembly of alpha-beta TR heterodimers with CD3 occurs in the endoplasmic reticulum where a single alpha-beta TR heterodimer associates with one CD3D-CD3E heterodimer, one CD3G-CD3E heterodimer and one CD247 homodimer forming a stable octameric structure. CD3D-CD3E and CD3G-CD3E heterodimers preferentially associate with TR alpha and TR beta chains, respectively. The association of the CD247 homodimer is the last step of TcR assembly in the endoplasmic reticulum and is required for transport to the cell surface.

It is found in the cell membrane. Its function is as follows. V region of the variable domain of T cell receptor (TR) alpha chain that participates in the antigen recognition. Alpha-beta T cell receptors are antigen specific receptors which are essential to the immune response and are present on the cell surface of T lymphocytes. Recognize peptide-major histocompatibility (MH) (pMH) complexes that are displayed by antigen presenting cells (APC), a prerequisite for efficient T cell adaptive immunity against pathogens. Binding of alpha-beta TR to pMH complex initiates TR-CD3 clustering on the cell surface and intracellular activation of LCK that phosphorylates the ITAM motifs of CD3G, CD3D, CD3E and CD247 enabling the recruitment of ZAP70. In turn ZAP70 phosphorylates LAT, which recruits numerous signaling molecules to form the LAT signalosome. The LAT signalosome propagates signal branching to three major signaling pathways, the calcium, the mitogen-activated protein kinase (MAPK) kinase and the nuclear factor NF-kappa-B (NF-kB) pathways, leading to the mobilization of transcription factors that are critical for gene expression and essential for T cell growth and differentiation. The T cell repertoire is generated in the thymus, by V-(D)-J rearrangement. This repertoire is then shaped by intrathymic selection events to generate a peripheral T cell pool of self-MH restricted, non-autoaggressive T cells. Post-thymic interaction of alpha-beta TR with the pMH complexes shapes TR structural and functional avidity. The protein is T cell receptor alpha variable 2 of Homo sapiens (Human).